Reading from the N-terminus, the 504-residue chain is UDP-N-acetylmuramoylalanine--D-glutamate ligase (504 aa).

An ATP-binding site is contributed by 129 to 135 (GTNGKTT).

This sequence belongs to the MurCDEF family.

It localises to the cytoplasm. The catalysed reaction is UDP-N-acetyl-alpha-D-muramoyl-L-alanine + D-glutamate + ATP = UDP-N-acetyl-alpha-D-muramoyl-L-alanyl-D-glutamate + ADP + phosphate + H(+). It participates in cell wall biogenesis; peptidoglycan biosynthesis. Cell wall formation. Catalyzes the addition of glutamate to the nucleotide precursor UDP-N-acetylmuramoyl-L-alanine (UMA). The polypeptide is UDP-N-acetylmuramoylalanine--D-glutamate ligase (Burkholderia pseudomallei (strain 668)).